The primary structure comprises 124 residues: UPF0231 protein Shewmr7_3366 (124 aa).

Belongs to the UPF0231 family.

In Shewanella sp. (strain MR-7), this protein is UPF0231 protein Shewmr7_3366.